The following is a 154-amino-acid chain: Cyanate hydratase (154 aa).

Residues R100, E103, and S126 contribute to the active site.

It belongs to the cyanase family.

It catalyses the reaction cyanate + hydrogencarbonate + 3 H(+) = NH4(+) + 2 CO2. Its function is as follows. Catalyzes the reaction of cyanate with bicarbonate to produce ammonia and carbon dioxide. The polypeptide is Cyanate hydratase (Aspergillus clavatus (strain ATCC 1007 / CBS 513.65 / DSM 816 / NCTC 3887 / NRRL 1 / QM 1276 / 107)).